Reading from the N-terminus, the 485-residue chain is Glutamyl-tRNA(Gln) amidotransferase subunit A (485 aa).

Active-site charge relay system residues include lysine 74 and serine 149. Serine 173 functions as the Acyl-ester intermediate in the catalytic mechanism.

Belongs to the amidase family. GatA subfamily. As to quaternary structure, heterotrimer of A, B and C subunits.

It carries out the reaction L-glutamyl-tRNA(Gln) + L-glutamine + ATP + H2O = L-glutaminyl-tRNA(Gln) + L-glutamate + ADP + phosphate + H(+). In terms of biological role, allows the formation of correctly charged Gln-tRNA(Gln) through the transamidation of misacylated Glu-tRNA(Gln) in organisms which lack glutaminyl-tRNA synthetase. The reaction takes place in the presence of glutamine and ATP through an activated gamma-phospho-Glu-tRNA(Gln). The sequence is that of Glutamyl-tRNA(Gln) amidotransferase subunit A from Janthinobacterium sp. (strain Marseille) (Minibacterium massiliensis).